An 804-amino-acid chain; its full sequence is Elongation factor G, mitochondrial (804 aa).

The transit peptide at 1–63 (MSMHRVARAV…RHFFQSPIIR (63 aa)) directs the protein to the mitochondrion. The region spanning 99 to 385 (RRVRNIGIAA…AVCDYLPNPA (287 aa)) is the tr-type G domain. GTP contacts are provided by residues 108 to 115 (AHIDSGKT), 183 to 187 (DTPGH), and 237 to 240 (NKMD).

Belongs to the TRAFAC class translation factor GTPase superfamily. Classic translation factor GTPase family. EF-G/EF-2 subfamily.

The protein resides in the mitochondrion. It functions in the pathway protein biosynthesis; polypeptide chain elongation. In terms of biological role, mitochondrial GTPase that catalyzes the GTP-dependent ribosomal translocation step during translation elongation. During this step, the ribosome changes from the pre-translocational (PRE) to the post-translocational (POST) state as the newly formed A-site-bound peptidyl-tRNA and P-site-bound deacylated tRNA move to the P and E sites, respectively. Catalyzes the coordinated movement of the two tRNA molecules, the mRNA and conformational changes in the ribosome. The sequence is that of Elongation factor G, mitochondrial (mef1) from Sclerotinia sclerotiorum (strain ATCC 18683 / 1980 / Ss-1) (White mold).